Reading from the N-terminus, the 139-residue chain is Putative nickel-responsive regulator (139 aa).

Residues histidine 79, histidine 90, histidine 92, and cysteine 98 each coordinate Ni(2+).

This sequence belongs to the transcriptional regulatory CopG/NikR family. It depends on Ni(2+) as a cofactor.

Transcriptional regulator. The protein is Putative nickel-responsive regulator of Trichlorobacter lovleyi (strain ATCC BAA-1151 / DSM 17278 / SZ) (Geobacter lovleyi).